The following is a 303-amino-acid chain: Olfactory receptor 4X2 (303 aa).

At 1–17 (MTEFIFLVLSPNQEVQR) the chain is on the extracellular side. The helical transmembrane segment at 18–41 (VCFVIFLFLYTAIVLGNFLIVLTV) threads the bilayer. The Cytoplasmic portion of the chain corresponds to 42-49 (MTSRSLGS). A helical membrane pass occupies residues 50 to 71 (PMYFFLSYLSFMEICYSSATAP). Residues 72–92 (KLISDLLAERKVISWWGCMAQ) are Extracellular-facing. Cys-89 and Cys-181 are disulfide-bonded. The chain crosses the membrane as a helical span at residues 93–112 (LFFLHFFGGTEIFLLTVMAY). At 113–131 (DHYVAICKPLSYTTIMNWQ) the chain is on the cytoplasmic side. A helical transmembrane segment spans residues 132–150 (VCTVLVGIAWVGGFMHSFA). Residues 151–187 (QILLIFHLLFCGPNVINHYFCDLVPLLKLACSDTFLI) are Extracellular-facing. Residues 188–211 (GLLIVANGGTLSVISFGVLLASYM) form a helical membrane-spanning segment. The Cytoplasmic segment spans residues 212–227 (VILLHLRTWSSEGWCK). Residues 228-250 (ALSTCGSHFAVVILFFGPCVFNS) form a helical membrane-spanning segment. Over 251-261 (LRPSTTLPIDK) the chain is Extracellular. A helical membrane pass occupies residues 262–281 (MVAVFYTVITAILNPVIYSL). Residues 282–303 (RNAEMRKAMKRLWIRTLRLNEK) lie on the Cytoplasmic side of the membrane.

This sequence belongs to the G-protein coupled receptor 1 family.

It localises to the cell membrane. Its function is as follows. Odorant receptor. This chain is Olfactory receptor 4X2 (OR4X2), found in Homo sapiens (Human).